Consider the following 557-residue polypeptide: Probable transcription factor sol4 (557 aa).

The fungal transcription factor domain stretch occupies residues 26–186 (IQYFFEDINW…EREMRRRMFC (161 aa)). Residues 463 to 490 (SGTQTRSMPSTETLTYNSSSSTSYGDGH) form a disordered region. Low complexity predominate over residues 472-485 (STETLTYNSSSSTS).

Its subcellular location is the nucleus. Its function is as follows. Probable transcription factor that regulates the expression of the gene cluster that mediates the biosynthesis of the phytotoxin solanapyrone, a causal agent of early blight disease of potato and tomato. This chain is Probable transcription factor sol4 (sol4), found in Alternaria solani.